Here is a 247-residue protein sequence, read N- to C-terminus: Fibroblast growth factor 14 (247 aa).

2 disordered regions span residues M1–R37 and E216–T247. The span at Q15–S25 shows a compositional bias: basic and acidic residues.

Belongs to the heparin-binding growth factors family. In terms of assembly, interacts with SCN8A. Brain and testis; widely distributed in the developing nervous system. In adult, high levels in the granular layer of the cerebellum, less in hippocampus and olfactory bulb.

It localises to the nucleus. Its function is as follows. Probably involved in nervous system development and function. This chain is Fibroblast growth factor 14 (Fgf14), found in Mus musculus (Mouse).